A 23-amino-acid chain; its full sequence is Malate dehydrogenase (23 aa).

Asn7 lines the NAD(+) pocket. Residue Arg23 participates in substrate binding.

Belongs to the LDH/MDH superfamily. MDH type 1 family. Homodimer.

It carries out the reaction (S)-malate + NAD(+) = oxaloacetate + NADH + H(+). The protein is Malate dehydrogenase of Pseudotsuga menziesii (Douglas-fir).